A 60-amino-acid polypeptide reads, in one-letter code: Large ribosomal subunit protein uL30 (60 aa).

The protein belongs to the universal ribosomal protein uL30 family. Part of the 50S ribosomal subunit.

The polypeptide is Large ribosomal subunit protein uL30 (Pediococcus pentosaceus (strain ATCC 25745 / CCUG 21536 / LMG 10740 / 183-1w)).